Reading from the N-terminus, the 845-residue chain is Protein SEY1 (845 aa).

Residues 1-29 (MELNVDSAKQLLAEHEQELQSAHDAHSIL) adopt a coiled-coil conformation. Residues 1 to 749 (MELNVDSAKQ…KRATVSSIAQ (749 aa)) are Cytoplasmic-facing. Residues 112-334 (GFGYDLCAVL…DPNFVFKTEY (223 aa)) enclose the GB1/RHD3-type G domain. 122-129 (GSQSTGKS) is a GTP binding site. Residues 750–770 (VPLWMYGVMLVLGWNELMAIL) traverse the membrane as a helical segment. Over 771–773 (SSP) the chain is Lumenal. Residues 774-794 (VYFAFLLVLIASAYIVWRLNL) form a helical membrane-spanning segment. At 795 to 845 (SGPLISVLRAVANEVHRLADAQLRTHFSQPLREPRPPAESRPAEQIELEPN) the chain is on the cytoplasmic side. The disordered stretch occupies residues 823–845 (QPLREPRPPAESRPAEQIELEPN). A compositionally biased stretch (basic and acidic residues) spans 826-838 (REPRPPAESRPAE).

It belongs to the TRAFAC class dynamin-like GTPase superfamily. GB1/RHD3 GTPase family. RHD3 subfamily.

It is found in the endoplasmic reticulum membrane. Functionally, cooperates with the reticulon proteins and tubule-shaping DP1 family proteins to generate and maintain the structure of the tubular endoplasmic reticulum network. Has GTPase activity, which is required for its function in ER organization. This is Protein SEY1 from Mycosarcoma maydis (Corn smut fungus).